The primary structure comprises 834 residues: 5-hydroxytryptamine receptor 2A (834 aa).

The Extracellular portion of the chain corresponds to 1 to 230 (MAHETSFNDA…TQLLRMAVTS (230 aa)). The disordered stretch occupies residues 56–75 (TDDGQLEDTNNNNNSKRYYS). Residues asparagine 68, asparagine 97, asparagine 161, asparagine 175, asparagine 183, asparagine 194, asparagine 203, and asparagine 209 are each glycosylated (N-linked (GlcNAc...) asparagine). Residues 231–253 (VLLGLMILVTIIGNVFVIAAIIL) traverse the membrane as a helical segment. Residues 254–263 (ERNLQNVANY) are Cytoplasmic-facing. The helical transmembrane segment at 264–285 (LVASLAVADLFVACLVMPLGAV) threads the bilayer. Over 286–300 (YEISQGWILGPELCD) the chain is Extracellular. Residues cysteine 299 and cysteine 378 are joined by a disulfide bond. A helical transmembrane segment spans residues 301–322 (IWTSCDVLCCTASILHLVAIAV). Over 323–341 (DRYWAVTNIDYIHSRTSNR) the chain is Cytoplasmic. The chain crosses the membrane as a helical span at residues 342-364 (VFMMIFCVWTAAVIVSLAPQFGW). Residues 365–391 (KDPDYLQRIEQQKCMVSQDVSYQVFAT) lie on the Extracellular side of the membrane. A helical membrane pass occupies residues 392–413 (CCTFYVPLLVILALYWKIYQTA). Residues 414-752 (RKRIHRRRPR…AKRERKAAKT (339 aa)) are Cytoplasmic-facing. 5 disordered regions span residues 420 to 442 (RRPR…ATDT), 460 to 516 (KTGS…STSG), 531 to 599 (QQGK…SEDQ), 617 to 640 (LEQV…TSNA), and 674 to 743 (STLT…TLEA). Polar residues-rich tracts occupy residues 482–502 (GNST…SNVD) and 532–542 (QGKSTAKSSAA). Over residues 551 to 564 (RQEDDGQRPEHGEQ) the composition is skewed to basic and acidic residues. The segment covering 565 to 575 (EDREELEDQDE) has biased composition (acidic residues). Positions 582–593 (TTATSATTAAGT) are enriched in low complexity. Over residues 674 to 694 (STLTSCNQSHPLCGTANESPS) the composition is skewed to polar residues. The span at 702–723 (QPTTPQQQPHQQAHQQQQQQQQ) shows a compositional bias: low complexity. Residues 753–776 (LAIITGAFVVCWLPFFVMALTMPL) form a helical membrane-spanning segment. The Extracellular segment spans residues 777 to 785 (CAACQISDS). The chain crosses the membrane as a helical span at residues 786-808 (VASLFLWLGYFNSTLNPVIYTIF). Residues 809–834 (SPEFRQAFKRILFGGHRPVHYRSGKL) are Cytoplasmic-facing.

It belongs to the G-protein coupled receptor 1 family.

It localises to the cell membrane. This is one of the several different receptors for 5-hydroxytryptamine (serotonin), a biogenic hormone that functions as a neurotransmitter, a hormone, and a mitogen. The activity of this receptor is mediated by G proteins which inhibit adenylate cyclase. The chain is 5-hydroxytryptamine receptor 2A (5-HT1A) from Drosophila melanogaster (Fruit fly).